Here is a 399-residue protein sequence, read N- to C-terminus: 26S proteasome regulatory subunit 10B homolog A (399 aa).

An N-acetylthreonine modification is found at T2. ATP is bound at residue 180-187; it reads GPPGTGKT. A Glycyl lysine isopeptide (Lys-Gly) (interchain with G-Cter in ubiquitin) cross-link involves residue K203.

Belongs to the AAA ATPase family. As to quaternary structure, component of the 19S regulatory particle (RP/PA700) base subcomplex of the 26S proteasome. The 26S proteasome is composed of a core protease (CP), known as the 20S proteasome, capped at one or both ends by the 19S regulatory particle (RP/PA700). The RP/PA700 complex is composed of at least 17 different subunits in two subcomplexes, the base and the lid, which form the portions proximal and distal to the 20S proteolytic core, respectively.

Its subcellular location is the cytoplasm. It is found in the nucleus. In terms of biological role, the 26S proteasome is involved in the ATP-dependent degradation of ubiquitinated proteins. The regulatory (or ATPase) complex confers ATP dependency and substrate specificity to the 26S complex. This chain is 26S proteasome regulatory subunit 10B homolog A (RPT4A), found in Arabidopsis thaliana (Mouse-ear cress).